Here is a 432-residue protein sequence, read N- to C-terminus: Putative transferase At1g60990, chloroplastic (432 aa).

The N-terminal 57 residues, 1–57, are a transit peptide targeting the chloroplast; the sequence is MNLLQSCKDMAMMMRIDSVSHITNTALLPCLYNGTVLRRRSLSLRKCGFRERKFQLR.

Belongs to the GcvT family. In terms of tissue distribution, expressed in young leaves (at protein level).

It localises to the plastid. It is found in the chloroplast. Its function is as follows. Folate-dependent protein involved in Fe/S cluster biogenesis. Functionally complements an E.coli mutant defective in ygfZ. The polypeptide is Putative transferase At1g60990, chloroplastic (Arabidopsis thaliana (Mouse-ear cress)).